Here is a 1232-residue protein sequence, read N- to C-terminus: DNA-directed RNA polymerase subunit beta (1232 aa).

The interval 1170-1232 (SVDEDADELE…LDLDDFGDEH (63 aa)) is disordered. The span at 1171–1180 (VDEDADELEV) shows a compositional bias: acidic residues. Residues 1189–1198 (PEEKEEKEKE) show a composition bias toward basic and acidic residues. The span at 1199–1232 (DSDEYDDLREEDVEPDLEELSLDDLDLDDFGDEH) shows a compositional bias: acidic residues.

It belongs to the RNA polymerase beta chain family. As to quaternary structure, the RNAP catalytic core consists of 2 alpha, 1 beta, 1 beta' and 1 omega subunit. When a sigma factor is associated with the core the holoenzyme is formed, which can initiate transcription.

The enzyme catalyses RNA(n) + a ribonucleoside 5'-triphosphate = RNA(n+1) + diphosphate. Functionally, DNA-dependent RNA polymerase catalyzes the transcription of DNA into RNA using the four ribonucleoside triphosphates as substrates. The chain is DNA-directed RNA polymerase subunit beta from Clostridium botulinum (strain Kyoto / Type A2).